A 232-amino-acid chain; its full sequence is Ornithine carbamoyltransferase (232 aa).

Carbamoyl phosphate is bound by residues Gln15, Arg39, and 66-69; that span reads HPTQ. Residues Asn99, Asp163, and 167–168 contribute to the L-ornithine site; that span reads SM. Carbamoyl phosphate contacts are provided by residues 204–207 and Thr232; that span reads HCLP.

It belongs to the aspartate/ornithine carbamoyltransferase superfamily. OTCase family.

The protein resides in the cytoplasm. The catalysed reaction is carbamoyl phosphate + L-ornithine = L-citrulline + phosphate + H(+). It participates in amino-acid biosynthesis; L-arginine biosynthesis; L-arginine from L-ornithine and carbamoyl phosphate: step 1/3. Reversibly catalyzes the transfer of the carbamoyl group from carbamoyl phosphate (CP) to the N(epsilon) atom of ornithine (ORN) to produce L-citrulline. The chain is Ornithine carbamoyltransferase (argF) from Neisseria sicca.